Here is a 435-residue protein sequence, read N- to C-terminus: E3 ubiquitin-protein ligase PUB22 (435 aa).

The U-box domain occupies 6–81 (EIPSFFLCPI…QSWCTLNASY (76 aa)).

In terms of assembly, interacts with RPN12A. Binds to EXO70B2. Auto-ubiquitinated leading to degradation via the 26S proteasome. This Auto-ubiquitination is repressed by the bacterial elicitor flg22 thus leading to a transiently increased protein stabilization and accumulation.

It localises to the cytoplasm. The catalysed reaction is S-ubiquitinyl-[E2 ubiquitin-conjugating enzyme]-L-cysteine + [acceptor protein]-L-lysine = [E2 ubiquitin-conjugating enzyme]-L-cysteine + N(6)-ubiquitinyl-[acceptor protein]-L-lysine.. It functions in the pathway protein modification; protein ubiquitination. E3 ubiquitin-protein ligase that negatively regulates water stress response. May control in coordination with PUB23 a drought signaling pathway by ubiquitinating cytosolic RPN12a. Acts as a negative regulator of the immunity triggered by the pathogen-associated molecular patterns (PAMPs), in association with PUB23 and PUB24. Regulates EXO70B2 ubiquitination and degradation via the 26S proteasome to attenuate PAMP-induced signaling. The chain is E3 ubiquitin-protein ligase PUB22 from Arabidopsis thaliana (Mouse-ear cress).